A 213-amino-acid chain; its full sequence is Large ribosomal subunit protein uL1 (213 aa).

The protein belongs to the universal ribosomal protein uL1 family. As to quaternary structure, part of the 50S ribosomal subunit.

Functionally, binds directly to 23S rRNA. Probably involved in E site tRNA release. In terms of biological role, protein L1 is also a translational repressor protein, it controls the translation of its operon by binding to its mRNA. In Methanococcus maripaludis (strain DSM 14266 / JCM 13030 / NBRC 101832 / S2 / LL), this protein is Large ribosomal subunit protein uL1.